The primary structure comprises 251 residues: MVTTSQEQGHDALTATSAVTGLPQKRFYRQRAHSNPIADHSFDYPARPEDVDWSALYPNIQPDQQVEFADIGCGYGGFLVTLGEMFPQKLSIGMEIRVKVSDYVVDRIAALRLKSGKLNGDAYKNIACIRTNAMKYLPNYFRKGQLEKMFFLYPDPHFKRAKHKWRIINQALLSEYAYVLRQGGLVYTMTDVEDLHQWIVSHMNQHPLYERISPEDESQDPITPKLYQSSEEGAKVVRNKGDHFLAIFRRI.

S-adenosyl-L-methionine contacts are provided by residues G72, 95-96, 132-133, and L152; these read EI and NA. The active site involves D155. 230 to 232 serves as a coordination point for S-adenosyl-L-methionine; the sequence is SEE.

The protein belongs to the class I-like SAM-binding methyltransferase superfamily. TrmB family.

It is found in the nucleus. It catalyses the reaction guanosine(46) in tRNA + S-adenosyl-L-methionine = N(7)-methylguanosine(46) in tRNA + S-adenosyl-L-homocysteine. Its pathway is tRNA modification; N(7)-methylguanine-tRNA biosynthesis. Its function is as follows. Catalyzes the formation of N(7)-methylguanine at position 46 (m7G46) in tRNA. This Drosophila willistoni (Fruit fly) protein is tRNA (guanine-N(7)-)-methyltransferase.